Here is a 629-residue protein sequence, read N- to C-terminus: tRNA uridine 5-carboxymethylaminomethyl modification enzyme MnmG (629 aa).

Position 13 to 18 (13 to 18 (GGGHAG)) interacts with FAD. An NAD(+)-binding site is contributed by 273–287 (GPRYCPSIEDKVMRF).

This sequence belongs to the MnmG family. Homodimer. Heterotetramer of two MnmE and two MnmG subunits. FAD is required as a cofactor.

It is found in the cytoplasm. Its function is as follows. NAD-binding protein involved in the addition of a carboxymethylaminomethyl (cmnm) group at the wobble position (U34) of certain tRNAs, forming tRNA-cmnm(5)s(2)U34. This is tRNA uridine 5-carboxymethylaminomethyl modification enzyme MnmG from Photorhabdus laumondii subsp. laumondii (strain DSM 15139 / CIP 105565 / TT01) (Photorhabdus luminescens subsp. laumondii).